Here is a 357-residue protein sequence, read N- to C-terminus: Dual-specificity RNA methyltransferase RlmN (357 aa).

E89 (proton acceptor) is an active-site residue. The 232-residue stretch at 109–340 (EGEKYTVCVS…CTIRESKALD (232 aa)) folds into the Radical SAM core domain. A disulfide bridge connects residues C116 and C345. Positions 123, 127, and 130 each coordinate [4Fe-4S] cluster. Residues 173-174 (GE), S203, 226-228 (SLH), and N302 each bind S-adenosyl-L-methionine. C345 functions as the S-methylcysteine intermediate in the catalytic mechanism.

It belongs to the radical SAM superfamily. RlmN family. Requires [4Fe-4S] cluster as cofactor.

The protein localises to the cytoplasm. It carries out the reaction adenosine(2503) in 23S rRNA + 2 reduced [2Fe-2S]-[ferredoxin] + 2 S-adenosyl-L-methionine = 2-methyladenosine(2503) in 23S rRNA + 5'-deoxyadenosine + L-methionine + 2 oxidized [2Fe-2S]-[ferredoxin] + S-adenosyl-L-homocysteine. It catalyses the reaction adenosine(37) in tRNA + 2 reduced [2Fe-2S]-[ferredoxin] + 2 S-adenosyl-L-methionine = 2-methyladenosine(37) in tRNA + 5'-deoxyadenosine + L-methionine + 2 oxidized [2Fe-2S]-[ferredoxin] + S-adenosyl-L-homocysteine. In terms of biological role, specifically methylates position 2 of adenine 2503 in 23S rRNA and position 2 of adenine 37 in tRNAs. m2A2503 modification seems to play a crucial role in the proofreading step occurring at the peptidyl transferase center and thus would serve to optimize ribosomal fidelity. This is Dual-specificity RNA methyltransferase RlmN from Helicobacter pylori (strain G27).